Here is a 75-residue protein sequence, read N- to C-terminus: Conotoxin Vn5.5 (75 aa).

The first 19 residues, 1–19 (MLCLPVFIILLLLASPAAP), serve as a signal peptide directing secretion. A propeptide spanning residues 20 to 59 (NPLEKRIQSDLIRAALEDADMKTDEREIVNIIDSISDVAK) is cleaved from the precursor. At Gln60 the chain carries Pyrrolidone carboxylic acid.

Belongs to the conotoxin T superfamily. Post-translationally, contains 2 disulfide bonds that can be either 'C1-C3, C2-C4' or 'C1-C4, C2-C3', since these disulfide connectivities have been observed for conotoxins with cysteine framework V (for examples, see AC P0DQQ7 and AC P81755). Expressed by the venom duct.

Its subcellular location is the secreted. The polypeptide is Conotoxin Vn5.5 (Conus ventricosus (Mediterranean cone)).